We begin with the raw amino-acid sequence, 126 residues long: Large ribosomal subunit protein bL12 (126 aa).

The protein belongs to the bacterial ribosomal protein bL12 family. Homodimer. Part of the ribosomal stalk of the 50S ribosomal subunit. Forms a multimeric L10(L12)X complex, where L10 forms an elongated spine to which 2 to 4 L12 dimers bind in a sequential fashion. Binds GTP-bound translation factors.

In terms of biological role, forms part of the ribosomal stalk which helps the ribosome interact with GTP-bound translation factors. Is thus essential for accurate translation. The chain is Large ribosomal subunit protein bL12 from Trichlorobacter lovleyi (strain ATCC BAA-1151 / DSM 17278 / SZ) (Geobacter lovleyi).